The primary structure comprises 266 residues: Non-structural maintenance of chromosomes element 1 homolog (266 aa).

Residues 1 to 102 (MQGSTRRMSV…SISKMATDFA (102 aa)) are interaction with NSMCE3. The RING-type; atypical zinc-finger motif lies at 191 to 232 (CNICHSLLIQGQSCETCGIRMHLPCVAKYFQSNAEPRCPHCN). The disordered stretch occupies residues 245–266 (PEKERESGVSKSNKKSLRSRQH). Position 251 is a phosphoserine (S251). A compositionally biased stretch (basic residues) spans 256-266 (SNKKSLRSRQH).

This sequence belongs to the NSE1 family. As to quaternary structure, component of the SMC5-SMC6 complex which consists at least of SMC5, SMC6, NSMCE2, NSMCE1, NSMCE4A or EID3 and NSMCE3. NSMCE1, NSMCE4A or EID3 and NSMCE3 probably form a subcomplex that bridges the head domains of the SMC5-SMC6 heterodimer. Interacts with NSMCE3. In terms of processing, ubiquitinated.

The protein localises to the nucleus. Its subcellular location is the chromosome. It localises to the telomere. The catalysed reaction is S-ubiquitinyl-[E2 ubiquitin-conjugating enzyme]-L-cysteine + [acceptor protein]-L-lysine = [E2 ubiquitin-conjugating enzyme]-L-cysteine + N(6)-ubiquitinyl-[acceptor protein]-L-lysine.. RING-type zinc finger-containing E3 ubiquitin ligase that assembles with melanoma antigen protein (MAGE) to catalyze the direct transfer of ubiquitin from E2 ubiquitin-conjugating enzyme to a specific substrate. Within MAGE-RING ubiquitin ligase complex, MAGE stimulates and specifies ubiquitin ligase activity likely through recruitment and/or stabilization of the E2 ubiquitin-conjugating enzyme at the E3:substrate complex. Involved in maintenance of genome integrity, DNA damage response and DNA repair. NSMCE3/MAGEG1 and NSMCE1 ubiquitin ligase are components of SMC5-SMC6 complex and may positively regulate homologous recombination-mediated DNA repair. In Pongo abelii (Sumatran orangutan), this protein is Non-structural maintenance of chromosomes element 1 homolog (NSMCE1).